The chain runs to 247 residues: uncharacterized protein (247 aa).

Residues 11 to 85 enclose the HTH merR-type domain; that stretch reads GMSIGAVLDL…LKVIRAQLDA (75 aa). Residues 14-38 constitute a DNA-binding region (H-T-H motif); that stretch reads IGAVLDLLRPDFPDVTISKIRFLEA.

Homodimer.

Transcriptional regulator that binds to its own promoter and thus may play a role in the regulation of the cotranscribed genes Rv1827 and Rv1828. Can also bind several promoter regions of genes that are essential, including ftsZ. Binds to the imperfect everted repeat sequence CTCAA through its winged-HTH motif. This is an uncharacterized protein from Mycobacterium tuberculosis (strain ATCC 25618 / H37Rv).